The sequence spans 682 residues: DNA ligase (682 aa).

NAD(+) is bound by residues 38–42 (DAEYD), 87–88 (SI), and Glu119. Catalysis depends on Lys121, which acts as the N6-AMP-lysine intermediate. Arg142, Glu181, Lys298, and Lys322 together coordinate NAD(+). 4 residues coordinate Zn(2+): Cys416, Cys419, Cys434, and Cys439. The 82-residue stretch at 601-682 (GHEMPLAGKT…LLSLLEPGER (82 aa)) folds into the BRCT domain.

Belongs to the NAD-dependent DNA ligase family. LigA subfamily. The cofactor is Mg(2+). Mn(2+) is required as a cofactor.

The enzyme catalyses NAD(+) + (deoxyribonucleotide)n-3'-hydroxyl + 5'-phospho-(deoxyribonucleotide)m = (deoxyribonucleotide)n+m + AMP + beta-nicotinamide D-nucleotide.. In terms of biological role, DNA ligase that catalyzes the formation of phosphodiester linkages between 5'-phosphoryl and 3'-hydroxyl groups in double-stranded DNA using NAD as a coenzyme and as the energy source for the reaction. It is essential for DNA replication and repair of damaged DNA. The protein is DNA ligase of Desulfosudis oleivorans (strain DSM 6200 / JCM 39069 / Hxd3) (Desulfococcus oleovorans).